Consider the following 713-residue polypeptide: Meiotic activator RIM4 (713 aa).

The tract at residues 1 to 90 (MKTEISTADS…TSTSTESRGR (90 aa)) is disordered. Residues 21–31 (ADSELVIREDI) are compositionally biased toward basic and acidic residues. A compositionally biased stretch (acidic residues) spans 50 to 71 (GEDSDTDSDNFLQDPEDDVDEE). The span at 74–90 (GRGTVTTTSTSTESRGR) shows a compositional bias: low complexity. The 80-residue stretch at 93–172 (SCIFVASLAA…RRLRCEPAKV (80 aa)) folds into the RRM 1 domain. The interval 276–337 (HQNNGIINND…SDGIYDDEDK (62 aa)) is disordered. A compositionally biased stretch (low complexity) spans 278–298 (NNGIINNDGSNNNDNNNSNNN). The span at 299-327 (NREDSRRNGDVIEEECGHVHGSDSEEKLT) shows a compositional bias: basic and acidic residues. The 75-residue stretch at 346–420 (RSIFVGQLDK…KTMHVQYKEV (75 aa)) folds into the RRM 2 domain. The segment at 524 to 609 (KSMPNSWSSP…KRYARRSSYG (86 aa)) is disordered. Phosphoserine is present on S525. The segment covering 526–546 (MPNSWSSPSSKSVNSENESVN) has biased composition (low complexity). Polar residues predominate over residues 563–574 (GRYNAANSFTTY). Positions 575 to 594 (NNSSAGNSNNNNNNNNSNSN) are enriched in low complexity.

Polyubiquitinated by RSP5.

Its function is as follows. Positive regulator of sporulation-specific genes and of sporulation. Required for premeiotic DNA synthesis and meiotic chromosomal segregation. May act in a nutritional signaling pathway. This chain is Meiotic activator RIM4 (RIM4), found in Saccharomyces cerevisiae (strain ATCC 204508 / S288c) (Baker's yeast).